The chain runs to 63 residues: MNNKINNIKITQVKSAIGRKYDQRLTLVGLGLNKINKSVILENTNSIKGMVEKVKHLLKIENM.

This sequence belongs to the universal ribosomal protein uL30 family. In terms of assembly, part of the 50S ribosomal subunit.

This chain is Large ribosomal subunit protein uL30, found in Rickettsia felis (strain ATCC VR-1525 / URRWXCal2) (Rickettsia azadi).